Reading from the N-terminus, the 468-residue chain is mRNA cleavage and polyadenylation factor CLP1 (468 aa).

The segment at 1-22 is disordered; the sequence is MLSLPGLNLAPQPAEPLNAPTS. Residues E35, K74, and 138 to 143 contribute to the ATP site; that span reads HSGKTS.

It belongs to the Clp1 family. Clp1 subfamily. As to quaternary structure, component of a pre-mRNA cleavage factor complex. Interacts directly with PCF11.

The protein localises to the nucleus. Its function is as follows. Required for endonucleolytic cleavage during polyadenylation-dependent pre-mRNA 3'-end formation. The sequence is that of mRNA cleavage and polyadenylation factor CLP1 from Phaeosphaeria nodorum (strain SN15 / ATCC MYA-4574 / FGSC 10173) (Glume blotch fungus).